The primary structure comprises 125 residues: UPF0734 protein DDB_G0273871/DDB_G0273177 (125 aa).

Belongs to the UPF0734 family.

This Dictyostelium discoideum (Social amoeba) protein is UPF0734 protein DDB_G0273871/DDB_G0273177.